The following is a 2521-amino-acid chain: Partially reducing polyketide synthase tpeA (2521 aa).

In terms of domain architecture, Ketosynthase family 3 (KS3) spans 7–434 (DQSIAVIGLS…GSNAHAIIDN (428 aa)). A disordered region spans residues 47–66 (RWNSRRFQDDKNHSQNTSRT). Residues cysteine 180, histidine 315, and histidine 357 each act as for beta-ketoacyl synthase activity in the active site. Residues 554-855 (YVFTGQGAQW…LRGPVTQILQ (302 aa)) form the Malonyl-CoA:ACP transacylase (MAT) domain. The segment at 948–1088 (SSFIGLPMPS…GLVTVEFEQL (141 aa)) is N-terminal hotdog fold. In terms of domain architecture, PKS/mFAS DH spans 948–1258 (SSFIGLPMPS…CVEMPSTAGV (311 aa)). A dehydratase (DH) domain region spans residues 949–1256 (SFIGLPMPSF…LTCVEMPSTA (308 aa)). A C-terminal hotdog fold region spans residues 1100 to 1258 (TTVQQAEAFY…CVEMPSTAGV (159 aa)). Residues 1809 to 2121 (GMLNTLCFQA…DNRHHGKITL (313 aa)) form the Enoyl reductase (ER) domain. One can recognise a Ketoreductase (KR) domain in the interval 2146–2323 (TYLIAGGLGG…AVTIDLGIVK (178 aa)). Residues 2433–2510 (DAVLFVTGAV…SFARDLVGKG (78 aa)) enclose the Carrier domain. Position 2470 is an O-(pantetheine 4'-phosphoryl)serine (serine 2470).

Pantetheine 4'-phosphate is required as a cofactor.

It functions in the pathway secondary metabolite biosynthesis. Functionally, partially reducing polyketide synthase; part of the gene cluster that mediates the biosynthesis of polyesters containing 2,4-dihydroxy-6-(2-hydroxypropyl)benzoate and 3-hydroxybutyrate moieties, such as talapolyester G, 15G256beta and 15G256beta-2; as well as to oxidized derivatives such as 15G256alpha. The biosynthesis of the polyesters probably starts with the formation of the diketide 3-hydroxybutyryl-S-ACP catalyzed by the partially reducing polyketide synthase tpeA. The acceptance of 3-hydroxybutyryl by the non-reducing polyketide synthase tpeB would initiate further elongation and cyclization, catalyzed by KS and PT, respectively, to form 2,4-dihydroxy-6-(2-hydroxyn-propyl)benzoyl-S-ACP intermediate. The TE domain could catalyze lactonization at this step to yield 6-hydroxymellein as a derailment product. The polyesterification process maybe occurs when additional molecules of 3-hydroxybutyryl are transferred to tpeB. Following the first esterification step, an intramolecular cyclization catalyzed by the TE domain of tpeB would give talarodioxadione 1, whereas the ethyl esterification of talapolyester G perhaps happens spontaneously. Further oxidation by the cytochrome P450 monooxygenase tpeC then leads to the formation of oxidized derivatives. The polypeptide is Partially reducing polyketide synthase tpeA (Talaromyces stipitatus (strain ATCC 10500 / CBS 375.48 / QM 6759 / NRRL 1006) (Penicillium stipitatum)).